Here is a 107-residue protein sequence, read N- to C-terminus: Anti-adapter protein IraM (107 aa).

The protein belongs to the IraM/RssC family.

It localises to the cytoplasm. In terms of biological role, inhibits RpoS proteolysis by regulating RssB activity, thereby increasing the stability of the sigma stress factor RpoS during magnesium starvation. The protein is Anti-adapter protein IraM of Escherichia coli (strain 55989 / EAEC).